The primary structure comprises 345 residues: Carbamoyl phosphate synthase small chain (345 aa).

A CPSase region spans residues 1-169 (MKKYLVMEDG…FVKGEEGGTV (169 aa)). Residues Ser45, Gly213, and Gly215 each coordinate L-glutamine. Residues 168–345 (TVLFIDLGSK…GEMKRRIGYA (178 aa)) form the Glutamine amidotransferase type-1 domain. Cys242 (nucleophile) is an active-site residue. L-glutamine is bound by residues Phe243, Gln246, Asn282, Gly284, and Tyr285. Active-site residues include His321 and Glu323.

Belongs to the CarA family. Composed of two chains; the small (or glutamine) chain promotes the hydrolysis of glutamine to ammonia, which is used by the large (or ammonia) chain to synthesize carbamoyl phosphate. Tetramer of heterodimers (alpha,beta)4.

The catalysed reaction is hydrogencarbonate + L-glutamine + 2 ATP + H2O = carbamoyl phosphate + L-glutamate + 2 ADP + phosphate + 2 H(+). The enzyme catalyses L-glutamine + H2O = L-glutamate + NH4(+). Its pathway is amino-acid biosynthesis; L-arginine biosynthesis; carbamoyl phosphate from bicarbonate: step 1/1. It functions in the pathway pyrimidine metabolism; UMP biosynthesis via de novo pathway; (S)-dihydroorotate from bicarbonate: step 1/3. Its function is as follows. Small subunit of the glutamine-dependent carbamoyl phosphate synthetase (CPSase). CPSase catalyzes the formation of carbamoyl phosphate from the ammonia moiety of glutamine, carbonate, and phosphate donated by ATP, constituting the first step of 2 biosynthetic pathways, one leading to arginine and/or urea and the other to pyrimidine nucleotides. The small subunit (glutamine amidotransferase) binds and cleaves glutamine to supply the large subunit with the substrate ammonia. In Thermoplasma volcanium (strain ATCC 51530 / DSM 4299 / JCM 9571 / NBRC 15438 / GSS1), this protein is Carbamoyl phosphate synthase small chain.